Here is a 758-residue protein sequence, read N- to C-terminus: Xaa-Pro dipeptidyl-peptidase (758 aa).

Residues Ser-349, Asp-469, and His-499 each act as charge relay system in the active site.

This sequence belongs to the peptidase S15 family. In terms of assembly, homodimer.

The protein localises to the cytoplasm. The catalysed reaction is Hydrolyzes Xaa-Pro-|- bonds to release unblocked, N-terminal dipeptides from substrates including Ala-Pro-|-p-nitroanilide and (sequentially) Tyr-Pro-|-Phe-Pro-|-Gly-Pro-|-Ile.. Its function is as follows. Removes N-terminal dipeptides sequentially from polypeptides having unsubstituted N-termini provided that the penultimate residue is proline. This chain is Xaa-Pro dipeptidyl-peptidase, found in Streptococcus uberis (strain ATCC BAA-854 / 0140J).